The sequence spans 255 residues: Ribonuclease HII (255 aa).

The RNase H type-2 domain maps to 70–255; that stretch reads DLVAGIDEVG…FEPVPEFLIK (186 aa). Positions 76, 77, and 168 each coordinate a divalent metal cation.

Belongs to the RNase HII family. Mn(2+) is required as a cofactor. It depends on Mg(2+) as a cofactor.

It localises to the cytoplasm. It carries out the reaction Endonucleolytic cleavage to 5'-phosphomonoester.. In terms of biological role, endonuclease that specifically degrades the RNA of RNA-DNA hybrids. The sequence is that of Ribonuclease HII from Pediococcus pentosaceus (strain ATCC 25745 / CCUG 21536 / LMG 10740 / 183-1w).